A 184-amino-acid chain; its full sequence is ATP synthase subunit b, chloroplastic (184 aa).

The helical transmembrane segment at I31 to L49 threads the bilayer.

This sequence belongs to the ATPase B chain family. F-type ATPases have 2 components, F(1) - the catalytic core - and F(0) - the membrane proton channel. F(1) has five subunits: alpha(3), beta(3), gamma(1), delta(1), epsilon(1). F(0) has four main subunits: a(1), b(1), b'(1) and c(10-14). The alpha and beta chains form an alternating ring which encloses part of the gamma chain. F(1) is attached to F(0) by a central stalk formed by the gamma and epsilon chains, while a peripheral stalk is formed by the delta, b and b' chains.

The protein resides in the plastid. It localises to the chloroplast thylakoid membrane. F(1)F(0) ATP synthase produces ATP from ADP in the presence of a proton or sodium gradient. F-type ATPases consist of two structural domains, F(1) containing the extramembraneous catalytic core and F(0) containing the membrane proton channel, linked together by a central stalk and a peripheral stalk. During catalysis, ATP synthesis in the catalytic domain of F(1) is coupled via a rotary mechanism of the central stalk subunits to proton translocation. Its function is as follows. Component of the F(0) channel, it forms part of the peripheral stalk, linking F(1) to F(0). In Pinus thunbergii (Japanese black pine), this protein is ATP synthase subunit b, chloroplastic.